A 160-amino-acid polypeptide reads, in one-letter code: 3-hydroxyacyl-[acyl-carrier-protein] dehydratase FabZ (160 aa).

The active site involves His58.

The protein belongs to the thioester dehydratase family. FabZ subfamily.

Its subcellular location is the cytoplasm. It catalyses the reaction a (3R)-hydroxyacyl-[ACP] = a (2E)-enoyl-[ACP] + H2O. In terms of biological role, involved in unsaturated fatty acids biosynthesis. Catalyzes the dehydration of short chain beta-hydroxyacyl-ACPs and long chain saturated and unsaturated beta-hydroxyacyl-ACPs. In Ruegeria sp. (strain TM1040) (Silicibacter sp.), this protein is 3-hydroxyacyl-[acyl-carrier-protein] dehydratase FabZ.